Here is a 237-residue protein sequence, read N- to C-terminus: Neural retina-specific leucine zipper protein (237 aa).

Glycyl lysine isopeptide (Lys-Gly) (interchain with G-Cter in SUMO) cross-links involve residues Lys20 and Lys24. Residues 23–57 (VKREPSEGRPGPPTASLGSTPYSSVPPSPTFSEPG) are disordered. The segment at 30-93 (GRPGPPTASL…AGEALGLSPE (64 aa)) is minimal transactivation domain (MTD). The segment at 159 to 185 (RLKQRRRTLKNRGYAQACRSKRLQQRR) is basic motif. The 64-residue stretch at 159–222 (RLKQRRRTLK…DLYKARCDRL (64 aa)) folds into the bZIP domain. The tract at residues 187 to 208 (LEAERARLAAQLDALRAEVARL) is leucine-zipper.

Belongs to the bZIP family. In terms of assembly, interacts with FIZ1; this interaction represses transactivation. Interacts (via the leucine-zipper domain) with CRX. Post-translationally, phosphorylated. Disumoylated at Lys-20. Sumoylation modulates the transcriptional activity of NRL on RHO and NR2E3 promoters, and is required for normal rod differentiation. Expressed in the brain and the retina. Expressed strongly in rod and cone cells (at protein level).

It localises to the cytoplasm. It is found in the nucleus. Its function is as follows. Acts as a transcriptional activator which regulates the expression of several rod-specific genes, including RHO and PDE6B. Also functions as a transcriptional coactivator, stimulating transcription mediated by the transcription factor CRX and NR2E3. Binds to the rhodopsin promoter in a sequence-specific manner. The chain is Neural retina-specific leucine zipper protein (NRL) from Homo sapiens (Human).